The primary structure comprises 359 residues: tRNA-specific 2-thiouridylase MnmA (359 aa).

Residues 9-16 and M35 contribute to the ATP site; that span reads GISGGVDS. The segment at 95–97 is interaction with target base in tRNA; sequence NPD. Residue C100 is the Nucleophile of the active site. C100 and C197 form a disulfide bridge. G124 contributes to the ATP binding site. Residues 147–149 are interaction with tRNA; that stretch reads KDQ. Catalysis depends on C197, which acts as the Cysteine persulfide intermediate. The tract at residues 309–310 is interaction with tRNA; that stretch reads RY.

It belongs to the MnmA/TRMU family.

The protein localises to the cytoplasm. It carries out the reaction S-sulfanyl-L-cysteinyl-[protein] + uridine(34) in tRNA + AH2 + ATP = 2-thiouridine(34) in tRNA + L-cysteinyl-[protein] + A + AMP + diphosphate + H(+). Functionally, catalyzes the 2-thiolation of uridine at the wobble position (U34) of tRNA, leading to the formation of s(2)U34. This Francisella tularensis subsp. tularensis (strain FSC 198) protein is tRNA-specific 2-thiouridylase MnmA.